A 164-amino-acid polypeptide reads, in one-letter code: UPF0304 protein Asuc_0543 (164 aa).

It belongs to the UPF0304 family.

This Actinobacillus succinogenes (strain ATCC 55618 / DSM 22257 / CCUG 43843 / 130Z) protein is UPF0304 protein Asuc_0543.